Here is a 340-residue protein sequence, read N- to C-terminus: Alcohol dehydrogenase (340 aa).

Positions 37, 58, 89, 92, 95, 103, and 145 each coordinate Zn(2+).

It belongs to the zinc-containing alcohol dehydrogenase family. Zn(2+) is required as a cofactor.

The catalysed reaction is a primary alcohol + NAD(+) = an aldehyde + NADH + H(+). It catalyses the reaction a secondary alcohol + NAD(+) = a ketone + NADH + H(+). In Staphylococcus epidermidis (strain ATCC 12228 / FDA PCI 1200), this protein is Alcohol dehydrogenase (adh).